We begin with the raw amino-acid sequence, 545 residues long: Thermosome subunit beta (545 aa).

This sequence belongs to the TCP-1 chaperonin family. In terms of assembly, forms a Heterooligomeric complex of two stacked eight-membered rings.

Molecular chaperone; binds unfolded polypeptides in vitro, and has a weak ATPase activity. This Archaeoglobus fulgidus (strain ATCC 49558 / DSM 4304 / JCM 9628 / NBRC 100126 / VC-16) protein is Thermosome subunit beta (thsB).